A 306-amino-acid chain; its full sequence is Ornithine carbamoyltransferase (306 aa).

Residues 46–49, Gln73, Arg97, and 124–127 contribute to the carbamoyl phosphate site; these read STRT and HPTQ. L-ornithine is bound by residues Asn156, Asp220, and 224 to 225; that span reads SM. Carbamoyl phosphate-binding positions include 260 to 261 and Arg288; that span reads CL.

This sequence belongs to the aspartate/ornithine carbamoyltransferase superfamily. OTCase family.

The protein localises to the cytoplasm. The catalysed reaction is carbamoyl phosphate + L-ornithine = L-citrulline + phosphate + H(+). It functions in the pathway amino-acid degradation; L-arginine degradation via ADI pathway; carbamoyl phosphate from L-arginine: step 2/2. Reversibly catalyzes the transfer of the carbamoyl group from carbamoyl phosphate (CP) to the N(epsilon) atom of ornithine (ORN) to produce L-citrulline. In Campylobacter jejuni subsp. jejuni serotype O:6 (strain 81116 / NCTC 11828), this protein is Ornithine carbamoyltransferase.